Consider the following 166-residue polypeptide: Putative pre-16S rRNA nuclease (166 aa).

Residues 1 to 24 form a disordered region; that stretch reads MPDTAAPTPDRPGPDDPGRGRRLG.

Belongs to the YqgF nuclease family.

It is found in the cytoplasm. Functionally, could be a nuclease involved in processing of the 5'-end of pre-16S rRNA. This chain is Putative pre-16S rRNA nuclease, found in Mycobacteroides abscessus (strain ATCC 19977 / DSM 44196 / CCUG 20993 / CIP 104536 / JCM 13569 / NCTC 13031 / TMC 1543 / L948) (Mycobacterium abscessus).